A 325-amino-acid polypeptide reads, in one-letter code: GTPase Era (325 aa).

The region spanning His-30 to Lys-198 is the Era-type G domain. A G1 region spans residues Gly-38–Ser-45. Gly-38–Ser-45 contacts GTP. The segment at Gln-64–His-68 is G2. Positions Asp-85–Gly-88 are G3. GTP contacts are provided by residues Asp-85–Leu-89 and Asn-147–Asp-150. The interval Asn-147–Asp-150 is G4. The interval Ile-177–Ala-179 is G5. Positions Val-221–Ser-307 constitute a KH type-2 domain.

It belongs to the TRAFAC class TrmE-Era-EngA-EngB-Septin-like GTPase superfamily. Era GTPase family. As to quaternary structure, monomer.

It localises to the cytoplasm. The protein localises to the cell inner membrane. Its function is as follows. An essential GTPase that binds both GDP and GTP, with rapid nucleotide exchange. Plays a role in 16S rRNA processing and 30S ribosomal subunit biogenesis and possibly also in cell cycle regulation and energy metabolism. This chain is GTPase Era, found in Vibrio cholerae serotype O1 (strain ATCC 39315 / El Tor Inaba N16961).